Reading from the N-terminus, the 348-residue chain is Selenide, water dikinase (348 aa).

Sec17 is a catalytic residue. Residue Sec17 is a non-standard amino acid, selenocysteine. ATP is bound by residues Lys20 and 48–50 (TAD). Residue Asp51 coordinates Mg(2+). ATP-binding positions include Asp68, Asp91, and 138 to 140 (GHT). Asp91 lines the Mg(2+) pocket. Residue Asp226 participates in Mg(2+) binding.

It belongs to the selenophosphate synthase 1 family. Class I subfamily. In terms of assembly, homodimer. It depends on Mg(2+) as a cofactor.

The catalysed reaction is hydrogenselenide + ATP + H2O = selenophosphate + AMP + phosphate + 2 H(+). Synthesizes selenophosphate from selenide and ATP. The chain is Selenide, water dikinase from Clostridioides difficile (strain 630) (Peptoclostridium difficile).